The following is a 134-amino-acid chain: Small ribosomal subunit protein uS9 (134 aa).

Residues 109–134 (DARRTEPHKPSKSSKGPRAKRQKSYR) are disordered. Residues 118–134 (PSKSSKGPRAKRQKSYR) are compositionally biased toward basic residues.

It belongs to the universal ribosomal protein uS9 family.

The sequence is that of Small ribosomal subunit protein uS9 from Methanococcus maripaludis (strain C7 / ATCC BAA-1331).